We begin with the raw amino-acid sequence, 230 residues long: Probable dual specificity protein phosphatase DDB_G0283417 (230 aa).

The 153-residue stretch at 78–230 (NNNYESINLY…LEIFEKELLF (153 aa)) folds into the Tyrosine-protein phosphatase domain. C174 serves as the catalytic Phosphocysteine intermediate.

This sequence belongs to the protein-tyrosine phosphatase family. Non-receptor class dual specificity subfamily.

It carries out the reaction O-phospho-L-tyrosyl-[protein] + H2O = L-tyrosyl-[protein] + phosphate. The catalysed reaction is O-phospho-L-seryl-[protein] + H2O = L-seryl-[protein] + phosphate. The enzyme catalyses O-phospho-L-threonyl-[protein] + H2O = L-threonyl-[protein] + phosphate. In terms of biological role, has a dual specificity toward Ser/Thr and Tyr-containing proteins. This is Probable dual specificity protein phosphatase DDB_G0283417 from Dictyostelium discoideum (Social amoeba).